Reading from the N-terminus, the 499-residue chain is Ent-kaurenoic acid oxidase 1 (499 aa).

A helical transmembrane segment spans residues 5–25; sequence AWWAVAAVVAALAVVALDAAV. Cys443 contacts heme.

Belongs to the cytochrome P450 family. Heme serves as cofactor.

The protein resides in the endoplasmic reticulum membrane. The enzyme catalyses ent-kaur-16-en-19-oate + 3 reduced [NADPH--hemoprotein reductase] + 3 O2 = gibberellin A12 + 3 oxidized [NADPH--hemoprotein reductase] + 4 H2O + 4 H(+). The catalysed reaction is ent-kaur-16-en-19-oate + reduced [NADPH--hemoprotein reductase] + O2 = ent-7alpha-hydroxykaur-16-en-19-oate + oxidized [NADPH--hemoprotein reductase] + H2O + H(+). It carries out the reaction ent-7alpha-hydroxykaur-16-en-19-oate + reduced [NADPH--hemoprotein reductase] + O2 = gibberellin A12 aldehyde + oxidized [NADPH--hemoprotein reductase] + 2 H2O + H(+). It catalyses the reaction gibberellin A12 aldehyde + reduced [NADPH--hemoprotein reductase] + O2 = gibberellin A12 + oxidized [NADPH--hemoprotein reductase] + H2O + 2 H(+). It functions in the pathway plant hormone biosynthesis; gibberellin biosynthesis. In terms of biological role, catalyzes three successive oxidations of ent-kaurenoic acid giving gibberellin 12 (GA12), a key step in gibberellins (GAs) biosynthesis. GAs, which are involved many processes, including stem elongation, play a central role in plant development. In Hordeum vulgare (Barley), this protein is Ent-kaurenoic acid oxidase 1.